A 207-amino-acid chain; its full sequence is Homeobox protein BarH-like 1 (207 aa).

A DNA-binding region (homeobox) is located at residues 95-154 (GRRSRTVFTELQLMGLEKRFEKQKYLSTPDRIDLAESLGLSQLQVKTWYQNRRMKWKKIV). The tract at residues 157 to 207 (GGGLESPTKPKGRPKKNSIPSSEQLSEQERAKETEKPPESPGEPSERQQEE) is disordered. Over residues 183-207 (EQERAKETEKPPESPGEPSERQQEE) the composition is skewed to basic and acidic residues.

The protein belongs to the BAR homeobox family. In terms of tissue distribution, expressed predominantly in the facial primordia, developing stomach, and proximal limbs.

Its subcellular location is the nucleus. Functionally, transcription factor, which is involved in craniofacial development, in odontogenic region definition, and in stomach organogenesis. Binds to a regulatory module of the NCAM promoter. This is Homeobox protein BarH-like 1 (BARX1) from Gallus gallus (Chicken).